The primary structure comprises 274 residues: 2,3,4,5-tetrahydropyridine-2,6-dicarboxylate N-succinyltransferase (274 aa).

Positions 104 and 141 each coordinate substrate.

This sequence belongs to the transferase hexapeptide repeat family. In terms of assembly, homotrimer.

It is found in the cytoplasm. It catalyses the reaction (S)-2,3,4,5-tetrahydrodipicolinate + succinyl-CoA + H2O = (S)-2-succinylamino-6-oxoheptanedioate + CoA. It functions in the pathway amino-acid biosynthesis; L-lysine biosynthesis via DAP pathway; LL-2,6-diaminopimelate from (S)-tetrahydrodipicolinate (succinylase route): step 1/3. Its activity is regulated as follows. Inhibited by p-(chloromercuri)benzenesulfonic acid and cobalt. The sequence is that of 2,3,4,5-tetrahydropyridine-2,6-dicarboxylate N-succinyltransferase (dapD) from Unknown prokaryotic organism.